The primary structure comprises 502 residues: Lysine--tRNA ligase (502 aa).

Glu-399 and Glu-406 together coordinate Mg(2+).

The protein belongs to the class-II aminoacyl-tRNA synthetase family. As to quaternary structure, homodimer. The cofactor is Mg(2+).

The protein localises to the cytoplasm. The enzyme catalyses tRNA(Lys) + L-lysine + ATP = L-lysyl-tRNA(Lys) + AMP + diphosphate. In Synechococcus sp. (strain RCC307), this protein is Lysine--tRNA ligase.